A 295-amino-acid polypeptide reads, in one-letter code: Cuticle collagen 3A3 (295 aa).

The tract at residues Ala-81–Pro-278 is disordered. Composition is skewed to pro residues over residues Pro-97 to Pro-109 and Ala-146 to Asp-160. Triple-helical region stretches follow at residues Gly-98–Pro-127, Gly-147–Asp-203, and Gly-212–Cys-277. A compositionally biased stretch (low complexity) spans Gln-172–Lys-182. Residues Pro-217–Glu-228 show a composition bias toward pro residues. Positions Pro-229–Lys-244 are enriched in low complexity. Residues Arg-261–Pro-271 are compositionally biased toward pro residues.

This sequence belongs to the cuticular collagen family.

Functionally, nematode cuticles are composed largely of collagen-like proteins. The cuticle functions both as an exoskeleton and as a barrier to protect the worm from its environment. In Haemonchus contortus (Barber pole worm), this protein is Cuticle collagen 3A3 (3A3).